A 257-amino-acid polypeptide reads, in one-letter code: Probable amino-acid ABC transporter-binding protein HI_1080 (257 aa).

The N-terminal stretch at 1–23 (MKKLLFTTALLTGAIAFSTFSHA) is a signal peptide.

The protein belongs to the bacterial solute-binding protein 3 family.

Its subcellular location is the periplasm. Probably part of a binding-protein-dependent transport system for an amino acid. This chain is Probable amino-acid ABC transporter-binding protein HI_1080, found in Haemophilus influenzae (strain ATCC 51907 / DSM 11121 / KW20 / Rd).